A 64-amino-acid chain; its full sequence is MAILRSEEIREMDGEELQKKLDELKAEYARYISKSAAAGIHENPGKMREIRRTIARVLTIMNEK.

It belongs to the universal ribosomal protein uL29 family.

This Methanothermobacter thermautotrophicus (strain ATCC 29096 / DSM 1053 / JCM 10044 / NBRC 100330 / Delta H) (Methanobacterium thermoautotrophicum) protein is Large ribosomal subunit protein uL29 (rpl29).